The chain runs to 219 residues: PRELI domain-containing protein 1, mitochondrial (219 aa).

The PRELI/MSF1 domain occupies 36-174 (TEDIVHREVT…ILAKLQGEAP (139 aa)).

In terms of assembly, forms a complex with TRIAP1 in the mitochondrion intermembrane space. Interacts with OPA1 and AIFM1. Highly expressed in fetal liver; less expressed in fetal brain, lung, and kidney. At the adult stage, expression is drastically reduced in the liver but highly expressed in the spleen, brain, lung, lymph nodes and peripheral blood leukocytes.

The protein resides in the mitochondrion. It is found in the mitochondrion intermembrane space. It carries out the reaction a 1,2-diacyl-sn-glycero-3-phosphate(in) = a 1,2-diacyl-sn-glycero-3-phosphate(out). In terms of biological role, involved in the modulation of the mitochondrial apoptotic pathway by ensuring the accumulation of cardiolipin (CL) in mitochondrial membranes. In vitro, the TRIAP1:PRELID1 complex mediates the transfer of phosphatidic acid (PA) between liposomes and probably functions as a PA transporter across the mitochondrion intermembrane space to provide PA for CL synthesis in the inner membrane. Regulates the mitochondrial apoptotic pathway in primary Th cells. Regulates Th cell differentiation by down-regulating STAT6 thereby reducing IL-4-induced Th2 cell number. May be important for the development of vital and immunocompetent organs. This chain is PRELI domain-containing protein 1, mitochondrial (PRELID1), found in Homo sapiens (Human).